Consider the following 221-residue polypeptide: Bcl-2-related ovarian killer protein homolog A (221 aa).

The BH4 signature appears at 32–44; sequence KVLCRDYIHSRLH. Residues 64–80 carry the BH3 motif; it reads VSSVLLWLGDELEYLRP. The BH1 signature appears at 110–140; it reads EIFSTEYSRKGLEKHKGVTWGKIVSLYAVAG. The BH2 signature appears at 173–187; it reads WLKKRGGWADITKCV. Residues 198–218 traverse the membrane as a helical segment; the sequence is WLVTAACACGHYLKAVVFYLL.

This sequence belongs to the Bcl-2 family. Strongest expression in ovary and eye, weaker expression in gut, kidney and brain. Little expression in liver or heart.

It is found in the membrane. Functionally, may play a role in apoptosis. Does not appear to show pro-apoptotic activity when expressed ectopically in early embryos. The polypeptide is Bcl-2-related ovarian killer protein homolog A (Danio rerio (Zebrafish)).